Reading from the N-terminus, the 293-residue chain is 4-diphosphocytidyl-2-C-methyl-D-erythritol kinase (293 aa).

Lys-16 is a catalytic residue. 99–109 (PMGAGLGGGSS) contributes to the ATP binding site. The active site involves Asp-141.

Belongs to the GHMP kinase family. IspE subfamily.

The catalysed reaction is 4-CDP-2-C-methyl-D-erythritol + ATP = 4-CDP-2-C-methyl-D-erythritol 2-phosphate + ADP + H(+). It participates in isoprenoid biosynthesis; isopentenyl diphosphate biosynthesis via DXP pathway; isopentenyl diphosphate from 1-deoxy-D-xylulose 5-phosphate: step 3/6. Catalyzes the phosphorylation of the position 2 hydroxy group of 4-diphosphocytidyl-2C-methyl-D-erythritol. The polypeptide is 4-diphosphocytidyl-2-C-methyl-D-erythritol kinase (Paraburkholderia phytofirmans (strain DSM 17436 / LMG 22146 / PsJN) (Burkholderia phytofirmans)).